A 113-amino-acid chain; its full sequence is Class I hydrophobin POH1 (113 aa).

The N-terminal stretch at 1–26 (MFSIRISTVVLAASALLAVAIPMTNT) is a signal peptide. 4 disulfides stabilise this stretch: cysteine 31–cysteine 93, cysteine 38–cysteine 87, cysteine 39–cysteine 74, and cysteine 94–cysteine 107.

The protein belongs to the fungal hydrophobin family. As to quaternary structure, self-assembles to form functional amyloid fibrils called rodlets. Self-assembly into fibrillar rodlets occurs spontaneously at hydrophobic:hydrophilic interfaces and the rodlets further associate laterally to form amphipathic monolayers. In terms of tissue distribution, expressed in the fruiting bodies but not in vegetative mycelium.

It is found in the secreted. Its subcellular location is the cell wall. In terms of biological role, aerial growth, conidiation, and dispersal of filamentous fungi in the environment rely upon a capability of their secreting small amphipathic proteins called hydrophobins (HPBs) with low sequence identity. Class I can self-assemble into an outermost layer of rodlet bundles on aerial cell surfaces, conferring cellular hydrophobicity that supports fungal growth, development and dispersal; whereas Class II form highly ordered films at water-air interfaces through intermolecular interactions but contribute nothing to the rodlet structure. POH1 is a class I hydrophobin that is involved in the formation of mycelium knots and subsequent fruiting bodies. This Pleurotus ostreatus (Oyster mushroom) protein is Class I hydrophobin POH1.